A 189-amino-acid chain; its full sequence is Adenylate kinase (189 aa).

ATP is bound at residue 11–16 (GSGKGT). The interval 31–60 (STGDVLRAEIKKGTELGKTAKGYIDQGQLL) is NMP. AMP is bound by residues T32, R37, 58–60 (QLL), 86–89 (GFPR), and Q93. Positions 127–137 (KRGQESGRADD) are LID. R128 serves as a coordination point for ATP. AMP is bound by residues R134 and R145. G173 provides a ligand contact to ATP.

It belongs to the adenylate kinase family. In terms of assembly, monomer.

Its subcellular location is the cytoplasm. The catalysed reaction is AMP + ATP = 2 ADP. Its pathway is purine metabolism; AMP biosynthesis via salvage pathway; AMP from ADP: step 1/1. In terms of biological role, catalyzes the reversible transfer of the terminal phosphate group between ATP and AMP. Plays an important role in cellular energy homeostasis and in adenine nucleotide metabolism. This chain is Adenylate kinase, found in Phocaeicola vulgatus (strain ATCC 8482 / DSM 1447 / JCM 5826 / CCUG 4940 / NBRC 14291 / NCTC 11154) (Bacteroides vulgatus).